Consider the following 248-residue polypeptide: Proteasome subunit alpha type-5 (248 aa).

This sequence belongs to the peptidase T1A family. The 26S proteasome consists of a 20S proteasome core and two 19S regulatory subunits. The 20S proteasome core is composed of 28 subunits that are arranged in four stacked rings, resulting in a barrel-shaped structure. The two end rings are each formed by seven alpha subunits, and the two central rings are each formed by seven beta subunits. The catalytic chamber with the active sites is on the inside of the barrel.

The protein resides in the cytoplasm. It localises to the nucleus. In terms of biological role, the proteasome is a multicatalytic proteinase complex which is characterized by its ability to cleave peptides with Arg, Phe, Tyr, Leu, and Glu adjacent to the leaving group at neutral or slightly basic pH. The proteasome has an ATP-dependent proteolytic activity. The sequence is that of Proteasome subunit alpha type-5 (pas-5) from Caenorhabditis elegans.